Here is a 153-residue protein sequence, read N- to C-terminus: Peptidoglycan-associated lipoprotein (153 aa).

The signal sequence occupies residues 1–19 (MNKFVKSLLVAGSVAALAA). C20 carries the N-palmitoyl cysteine lipid modification. A lipid anchor (S-diacylglycerol cysteine) is attached at C20. The 114-residue stretch at 40 to 153 (SVADLQQRYN…SKNRRAVLAY (114 aa)) folds into the OmpA-like domain. Peptidoglycan binding stretches follow at residues 55–56 (FD) and 97–101 (YNIAL).

Belongs to the Pal lipoprotein family. As to quaternary structure, the Tol-Pal system is composed of five core proteins: the inner membrane proteins TolA, TolQ and TolR, the periplasmic protein TolB and the outer membrane protein Pal. They form a network linking the inner and outer membranes and the peptidoglycan layer.

It is found in the cell outer membrane. In terms of biological role, part of the Tol-Pal system, which plays a role in outer membrane invagination during cell division and is important for maintaining outer membrane integrity. This chain is Peptidoglycan-associated lipoprotein, found in Haemophilus influenzae (strain ATCC 51907 / DSM 11121 / KW20 / Rd).